Reading from the N-terminus, the 113-residue chain is Small ribosomal subunit protein bS16 (113 aa).

The tract at residues 84–113 (PKPAYTEQPKKSAPKKRAQERAAAAAAAAA) is disordered.

The protein belongs to the bacterial ribosomal protein bS16 family.

This Gluconacetobacter diazotrophicus (strain ATCC 49037 / DSM 5601 / CCUG 37298 / CIP 103539 / LMG 7603 / PAl5) protein is Small ribosomal subunit protein bS16.